The primary structure comprises 509 residues: tRNA-2-methylthio-N(6)-dimethylallyladenosine synthase (509 aa).

The disordered stretch occupies residues 1–21 (MNEKQRIESGQVNPSDKKSEK). Positions 66 to 184 (RKFYIRTYGC…LPELLSEAYL (119 aa)) constitute an MTTase N-terminal domain. Positions 75, 111, 145, 221, 225, and 228 each coordinate [4Fe-4S] cluster. The 231-residue stretch at 207 to 437 (RTGKIKGWVN…NEVVNEISAK (231 aa)) folds into the Radical SAM core domain. The region spanning 440–503 (KEYEGQVVEV…TWSLDGEMVG (64 aa)) is the TRAM domain.

Belongs to the methylthiotransferase family. MiaB subfamily. As to quaternary structure, monomer. The cofactor is [4Fe-4S] cluster.

Its subcellular location is the cytoplasm. The catalysed reaction is N(6)-dimethylallyladenosine(37) in tRNA + (sulfur carrier)-SH + AH2 + 2 S-adenosyl-L-methionine = 2-methylsulfanyl-N(6)-dimethylallyladenosine(37) in tRNA + (sulfur carrier)-H + 5'-deoxyadenosine + L-methionine + A + S-adenosyl-L-homocysteine + 2 H(+). Functionally, catalyzes the methylthiolation of N6-(dimethylallyl)adenosine (i(6)A), leading to the formation of 2-methylthio-N6-(dimethylallyl)adenosine (ms(2)i(6)A) at position 37 in tRNAs that read codons beginning with uridine. The polypeptide is tRNA-2-methylthio-N(6)-dimethylallyladenosine synthase (Bacillus licheniformis (strain ATCC 14580 / DSM 13 / JCM 2505 / CCUG 7422 / NBRC 12200 / NCIMB 9375 / NCTC 10341 / NRRL NRS-1264 / Gibson 46)).